The sequence spans 128 residues: Entry-fusion complex protein OPG094 (128 aa).

At 1–30 the chain is on the intravirion side; it reads MENVPNVYFNPVFIEPTFKHSLLSVYKHRL. Residues 31–51 form a helical; Signal-anchor for type III membrane protein membrane-spanning segment; the sequence is IVLFEVFIVFILIYVFFRSEL. Residues 52–107 lie on the Virion surface side of the membrane; sequence NMFFMPKRKIPDPIDRLRRANLACEDDKLMIYGLPWMTTQTSALSINSKPIVYKDC. Residues Cys75 and Cys107 are joined by a disulfide bond.

This sequence belongs to the orthopoxvirus OPG099 family. Interacts with OPG086. Component of the entry fusion complex (EFC) composed of OPG053, OPG076, OPG086, OPG094, OPG095, OPG099, OPG107, OPG143, OPG104J5, OPG147 and OPG155. Except for OPG095 and OPG053, each of the EFC proteins is required for assembly or stability of the complex. In terms of processing, most cysteines are linked by disulfide bonds. They are created by the viral disulfide bond formation pathway, a poxvirus-specific redox pathway that operates on the cytoplasmic side of the MV membranes. Unglycosylated because produced in viral factories instead of the classic ER -Golgi route.

The protein localises to the virion membrane. Component of the entry fusion complex (EFC), which consists of 11 proteins. During cell infection, this complex mediates entry of the virion core into the host cytoplasm by a two-step mechanism consisting of lipid mixing of the viral and cellular membranes and subsequent pore formation. In Vaccinia virus (strain Ankara) (VACV), this protein is Entry-fusion complex protein OPG094 (OPG099).